A 71-amino-acid chain; its full sequence is Large ribosomal subunit protein bL31 (71 aa).

4 residues coordinate Zn(2+): Cys-16, Cys-18, Cys-38, and Cys-41.

It belongs to the bacterial ribosomal protein bL31 family. Type A subfamily. As to quaternary structure, part of the 50S ribosomal subunit. The cofactor is Zn(2+).

Its function is as follows. Binds the 23S rRNA. The chain is Large ribosomal subunit protein bL31 from Francisella tularensis subsp. mediasiatica (strain FSC147).